We begin with the raw amino-acid sequence, 95 residues long: Defensin-A3 (95 aa).

A signal peptide spans 1–19; that stretch reads MRTLGLLLALLFLAAQTPA. Positions 20-61 are excised as a propeptide; sequence QLMGEEAEEATGRPEATEAQEAAAALMAARAADRHVTDPEQQ. 3 disulfide bridges follow: Cys66–Cys93, Cys68–Cys82, and Cys72–Cys92.

This sequence belongs to the alpha-defensin family. Highly expressed in spleen, and expressed at lower levels in intestin and lung.

Its subcellular location is the secreted. Has antimicrobial activity. The sequence is that of Defensin-A3 from Ornithorhynchus anatinus (Duckbill platypus).